The primary structure comprises 435 residues: Transcription activator ACTTR (435 aa).

The segment at residues 16 to 43 (CDFCTQSKLRCNKNKPSCRRCTIQQQPC) is a DNA-binding region (zn(2)-C6 fungal-type). The disordered stretch occupies residues 48–89 (ARRTGRPPKRPRKANDGQEANEQHGDQDPVTSTPGGSCQQQS). A compositionally biased stretch (basic residues) spans 50–59 (RTGRPPKRPR). Basic and acidic residues predominate over residues 60–74 (KANDGQEANEQHGDQ). The segment covering 76–89 (PVTSTPGGSCQQQS) has biased composition (polar residues).

The protein localises to the nucleus. Transcription factor that regulates the expression of the gene clusters that mediate the biosynthesis of the host-selective toxins (HSTs) ACT-toxins responsible for brown spot of tangerine disease by the tangerine pathotype which affects tangerines and mandarins. ACT-toxins consist of three moieties, 9,10-epoxy-8-hydroxy-9-methyl-decatrienoic acid (EDA), valine and a polyketide. ACT-toxin I is toxic to both citrus and pear; toxin II the 5''-deoxy derivative of ACT-toxin I, is highly toxic to pear and slightly toxic to citrus. On cellular level, ACT-toxins affect plasma membrane of susceptible cells and cause a sudden increase in loss of K(+) after a few minutes of toxin treatment. The sequence is that of Transcription activator ACTTR from Alternaria alternata (Alternaria rot fungus).